Reading from the N-terminus, the 103-residue chain is Putative glutaredoxin-C12 (103 aa).

The 102-residue stretch at 1-102 (MERVRDLASE…QMLKASNAIW (102 aa)) folds into the Glutaredoxin domain. Cys21 and Cys24 are oxidised to a cystine.

This sequence belongs to the glutaredoxin family. CC-type subfamily.

Its subcellular location is the cytoplasm. Has a glutathione-disulfide oxidoreductase activity in the presence of NADPH and glutathione reductase. Reduces low molecular weight disulfides and proteins. The polypeptide is Putative glutaredoxin-C12 (GRXC12) (Arabidopsis thaliana (Mouse-ear cress)).